The following is an 805-amino-acid chain: Leucine--tRNA ligase (805 aa).

A 'HIGH' region motif is present at residues 40–51 (PYPSGSGLHVGH). Positions 576–580 (KMSKS) match the 'KMSKS' region motif. Residue Lys-579 coordinates ATP.

This sequence belongs to the class-I aminoacyl-tRNA synthetase family.

It localises to the cytoplasm. The enzyme catalyses tRNA(Leu) + L-leucine + ATP = L-leucyl-tRNA(Leu) + AMP + diphosphate. The protein is Leucine--tRNA ligase of Chlorobium chlorochromatii (strain CaD3).